A 208-amino-acid chain; its full sequence is Putative proteasome subunit alpha type-4-B (208 aa).

It belongs to the peptidase T1A family. Component of the 20S core complex of the 26S proteasome. The 26S proteasome is composed of a core protease (CP), known as the 20S proteasome, capped at one or both ends by the 19S regulatory particle (RP/PA700). The 20S proteasome core is composed of 28 subunits that are arranged in four stacked rings, resulting in a barrel-shaped structure. The two end rings are each formed by seven alpha subunits, and the two central rings are each formed by seven beta subunits. The catalytic chamber with the active sites is on the inside of the barrel.

It is found in the cytoplasm. It localises to the nucleus. In terms of biological role, the proteasome is a multicatalytic proteinase complex which is characterized by its ability to cleave peptides with Arg, Phe, Tyr, Leu, and Glu adjacent to the leaving group at neutral or slightly basic pH. The proteasome has an ATP-dependent proteolytic activity. This Arabidopsis thaliana (Mouse-ear cress) protein is Putative proteasome subunit alpha type-4-B (PAC2).